Here is a 565-residue protein sequence, read N- to C-terminus: NAD-dependent malic enzyme (565 aa).

Residue tyrosine 104 is the Proton donor of the active site. Arginine 157 contacts NAD(+). Lysine 175 acts as the Proton acceptor in catalysis. A divalent metal cation is bound by residues glutamate 246, aspartate 247, and aspartate 270. Positions 270 and 418 each coordinate NAD(+).

The protein belongs to the malic enzymes family. Homotetramer. Mg(2+) serves as cofactor. Requires Mn(2+) as cofactor.

The catalysed reaction is (S)-malate + NAD(+) = pyruvate + CO2 + NADH. It catalyses the reaction oxaloacetate + H(+) = pyruvate + CO2. The polypeptide is NAD-dependent malic enzyme (Serratia proteamaculans (strain 568)).